The following is a 201-amino-acid chain: Large ribosomal subunit protein uL4 (201 aa).

A disordered region spans residues 39-72 (KRQGTSAQKSRSEVIGSGKKPWRQKGTGRARAGS).

The protein belongs to the universal ribosomal protein uL4 family. In terms of assembly, part of the 50S ribosomal subunit.

In terms of biological role, one of the primary rRNA binding proteins, this protein initially binds near the 5'-end of the 23S rRNA. It is important during the early stages of 50S assembly. It makes multiple contacts with different domains of the 23S rRNA in the assembled 50S subunit and ribosome. Functionally, forms part of the polypeptide exit tunnel. The chain is Large ribosomal subunit protein uL4 from Wigglesworthia glossinidia brevipalpis.